The chain runs to 178 residues: ATP-dependent protease subunit HslV (178 aa).

Residue Thr-8 is part of the active site. Gly-163, Cys-166, and Thr-169 together coordinate Na(+).

This sequence belongs to the peptidase T1B family. HslV subfamily. A double ring-shaped homohexamer of HslV is capped on each side by a ring-shaped HslU homohexamer. The assembly of the HslU/HslV complex is dependent on binding of ATP.

Its subcellular location is the cytoplasm. It catalyses the reaction ATP-dependent cleavage of peptide bonds with broad specificity.. Allosterically activated by HslU binding. Its function is as follows. Protease subunit of a proteasome-like degradation complex believed to be a general protein degrading machinery. The protein is ATP-dependent protease subunit HslV of Xylella fastidiosa (strain 9a5c).